The following is a 401-amino-acid chain: Chaperone protein DnaJ (401 aa).

The J domain maps to 4–69; it reads DYYEVLGVSR…DKRRRYDQFG (66 aa). A CR-type zinc finger spans residues 156 to 237; it reads GVEKTLKIKK…CYGEGIKQGD (82 aa). Zn(2+) is bound by residues Cys169, Cys172, Cys185, Cys188, Cys211, Cys214, Cys225, and Cys228. CXXCXGXG motif repeat units lie at residues 169–176, 185–192, 211–218, and 225–232; these read CKECNGSG, CQTCHGSG, CPTCGGEG, and CTACYGEG. Residues 377-401 form a disordered region; the sequence is AFSPSGSNNDKEEKSFFEKARDIFS. A compositionally biased stretch (basic and acidic residues) spans 385–401; it reads NDKEEKSFFEKARDIFS.

The protein belongs to the DnaJ family. Homodimer. It depends on Zn(2+) as a cofactor.

The protein resides in the cytoplasm. Participates actively in the response to hyperosmotic and heat shock by preventing the aggregation of stress-denatured proteins and by disaggregating proteins, also in an autonomous, DnaK-independent fashion. Unfolded proteins bind initially to DnaJ; upon interaction with the DnaJ-bound protein, DnaK hydrolyzes its bound ATP, resulting in the formation of a stable complex. GrpE releases ADP from DnaK; ATP binding to DnaK triggers the release of the substrate protein, thus completing the reaction cycle. Several rounds of ATP-dependent interactions between DnaJ, DnaK and GrpE are required for fully efficient folding. Also involved, together with DnaK and GrpE, in the DNA replication of plasmids through activation of initiation proteins. This is Chaperone protein DnaJ from Chlorobium limicola (strain DSM 245 / NBRC 103803 / 6330).